The primary structure comprises 910 residues: Staphylococcal nuclease domain-containing protein 1 (910 aa).

An N-acetylalanine modification is found at A2. TNase-like domains are found at residues T18–E166, K193–D328, and K341–K496. The residue at position 103 (T103) is a Phosphothreonine. K193 is subject to N6-acetyllysine. A phosphothreonine mark is found at T235 and T240. 2 short sequence motifs (nuclear localization signal) span residues R321–I325 and K388–P392. S426 carries the post-translational modification Phosphoserine. A Glycyl lysine isopeptide (Lys-Gly) (interchain with G-Cter in SUMO2) cross-link involves residue K513. A TNase-like 4 domain is found at G525 to H660. N6-acetyllysine is present on K641. At S645 the chain carries Phosphoserine. Residues A729–R787 form the Tudor domain. T779 bears the Phosphothreonine mark. Phosphoserine occurs at positions 785 and 909.

In terms of assembly, forms a ternary complex with STAT6 and POLR2A. Associates with the RNA-induced silencing complex (RISC). Interacts with the RISC components AGO2, FMR1 and TNRC6A. Interacts with GTF2E1 and GTF2E2. Interacts with PIM1. Interacts with STAT5. Interacts with SYT11 (via C2 2 domain); the interaction with SYT11 is direct. Post-translationally, phosphorylated by PIM1 in vitro.

The protein resides in the cytoplasm. It is found in the nucleus. Its subcellular location is the melanosome. It carries out the reaction Endonucleolytic cleavage to nucleoside 3'-phosphates and 3'-phosphooligonucleotide end-products.. In terms of biological role, endonuclease that mediates miRNA decay of both protein-free and AGO2-loaded miRNAs. As part of its function in miRNA decay, regulates mRNAs involved in G1-to-S phase transition. Functions as a bridging factor between STAT6 and the basal transcription factor. Plays a role in PIM1 regulation of MYB activity. Functions as a transcriptional coactivator for STAT5. The protein is Staphylococcal nuclease domain-containing protein 1 (Snd1) of Mus musculus (Mouse).